A 26-amino-acid polypeptide reads, in one-letter code: Fumarylacetoacetate hydrolase domain-containing protein 2A (26 aa).

This sequence belongs to the FAH family. Ca(2+) is required as a cofactor. The cofactor is Mg(2+).

Its function is as follows. May have hydrolase activity. This Mesocricetus auratus (Golden hamster) protein is Fumarylacetoacetate hydrolase domain-containing protein 2A.